A 399-amino-acid polypeptide reads, in one-letter code: Centrosomal protein 43 (399 aa).

Residues 70-102 (DGRLVASLVAEFLQFFNLDFTLAVFHPETSTIQ) form the LisH domain. 2 disordered regions span residues 142 to 216 (PASV…SKSS) and 236 to 311 (DARD…KRGS). Phosphoserine occurs at positions 152 and 160. A compositionally biased stretch (polar residues) spans 163–172 (GKSSANSTPS). Threonine 170 carries the phosphothreonine modification. Residues 175-186 (PRYKGQGKKKTI) are compositionally biased toward basic residues. The segment covering 197–216 (SETSQSEPSVSLSESKSKSS) has biased composition (low complexity). Serine 202 bears the Phosphoserine mark. Positions 246-256 (DGDDVEGDSFF) are enriched in acidic residues. Positions 259-275 (PIPKPEKTYGWRAEPRK) are enriched in basic and acidic residues. The span at 290-302 (RSGLSSLAGAPSL) shows a compositional bias: low complexity. 2 positions are modified to phosphoserine: serine 301 and serine 326. The segment at 328–354 (GLGTGEDEDYADDFNSASHRSEKSELS) is disordered. Tyrosine 337 carries the phosphotyrosine modification.

This sequence belongs to the CEP43 family. Homodimer. Part of a ternary complex that contains CEP350, CEP43 and MAPRE1. Interacts directly with CEP350 and MAPRE1. Interacts with CEP19. Interacts (via N-terminus) with CEP350 (via C-terminus).

The protein resides in the cytoplasm. The protein localises to the cytoskeleton. Its subcellular location is the microtubule organizing center. It is found in the centrosome. It localises to the centriole. The protein resides in the cilium basal body. Functionally, required for anchoring microtubules to the centrosomes. Required for ciliation. The sequence is that of Centrosomal protein 43 from Mus musculus (Mouse).